The following is a 238-amino-acid chain: Transcription factor PCL1 (238 aa).

Residues 71–90 (RLRRASSSSSSSFPAFASKG) show a composition bias toward low complexity. A disordered region spans residues 71-119 (RLRRASSSSSSSFPAFASKGAGTGADEAESGGGADGGNGNTNNSSSKRA). Positions 100–109 (SGGGADGGNG) are enriched in gly residues. Residues 115-174 (SSKRARLVWTPQLHKRFVEVVAHLGMKNAVPKTIMQLMNVEGLTRENVASHLQKYRLYVK) constitute a DNA-binding region (myb-like GARP).

The protein resides in the nucleus. Functionally, transcription factor that is essential for the generation of the circadian clock oscillation. Binds to specific sites on CCA1 promoter leading to CCA1 activation. This is Transcription factor PCL1 (PCL1) from Oryza sativa subsp. japonica (Rice).